The sequence spans 484 residues: tRNA sulfurtransferase (484 aa).

One can recognise a THUMP domain in the interval 63 to 167; it reads DVFADRLACI…QDKLYMVERR (105 aa). ATP contacts are provided by residues 185 to 186, Lys-267, Gly-289, and Gln-298; that span reads LI. A disulfide bond links Cys-346 and Cys-458. One can recognise a Rhodanese domain in the interval 406-484; that stretch reads VASGEIIIDV…GYTNVKVYRP (79 aa). Cys-458 serves as the catalytic Cysteine persulfide intermediate.

The protein belongs to the ThiI family.

The protein localises to the cytoplasm. It catalyses the reaction [ThiI sulfur-carrier protein]-S-sulfanyl-L-cysteine + a uridine in tRNA + 2 reduced [2Fe-2S]-[ferredoxin] + ATP + H(+) = [ThiI sulfur-carrier protein]-L-cysteine + a 4-thiouridine in tRNA + 2 oxidized [2Fe-2S]-[ferredoxin] + AMP + diphosphate. The catalysed reaction is [ThiS sulfur-carrier protein]-C-terminal Gly-Gly-AMP + S-sulfanyl-L-cysteinyl-[cysteine desulfurase] + AH2 = [ThiS sulfur-carrier protein]-C-terminal-Gly-aminoethanethioate + L-cysteinyl-[cysteine desulfurase] + A + AMP + 2 H(+). Its pathway is cofactor biosynthesis; thiamine diphosphate biosynthesis. In terms of biological role, catalyzes the ATP-dependent transfer of a sulfur to tRNA to produce 4-thiouridine in position 8 of tRNAs, which functions as a near-UV photosensor. Also catalyzes the transfer of sulfur to the sulfur carrier protein ThiS, forming ThiS-thiocarboxylate. This is a step in the synthesis of thiazole, in the thiamine biosynthesis pathway. The sulfur is donated as persulfide by IscS. This chain is tRNA sulfurtransferase, found in Shewanella frigidimarina (strain NCIMB 400).